A 303-amino-acid chain; its full sequence is L(+)-tartrate dehydratase subunit alpha (303 aa).

Positions 71, 190, and 277 each coordinate iron-sulfur cluster.

Belongs to the class-I fumarase family. In terms of assembly, tetramer of two alpha and two beta subunits. Requires iron-sulfur cluster as cofactor.

The catalysed reaction is (2R,3R)-tartrate = oxaloacetate + H2O. The protein is L(+)-tartrate dehydratase subunit alpha (ttdA) of Escherichia coli O6:H1 (strain CFT073 / ATCC 700928 / UPEC).